An 823-amino-acid polypeptide reads, in one-letter code: MGRASRSAVLRRALLLLLLLLLLRTTTTRALGPRISVPLGSEERLIRKFEAENISNYTALLLSQDGKTLYVGAREALFALNSNLSFLPGGEYQELLWSADADRKQQCSFKGKDPKRDCQNYIKILLPLNSSHLLTCGTAAFSPLCAYIHIASFTLAQDEAGNVILEDGKGRCPFDPNFKSTALVVDGELYTGTVSSFQGNDPAISRSQSSRPTKTESSLNWLQDPAFVASAYVPESLGSPIGDDDKIYFFFSETGQEFEFFENTIVSRVARVCKGDEGGERVLQQRWTSFLKAQLLCSRPDDGFPFNVLQDVFTLNPNPQDWRKTLFYGVFTSQWHRGTTEGSAICVFTMNDVQKAFDGLYKKVNRETQQWYTETHQVPTPRPGACITNSARERKINSSLQLPDRVLNFLKDHFLMDGQVRSRLLLLQPRARYQRVAVHRVPGLHSTYDVLFLGTGDGRLHKAVTLSSRVHIIEELQIFPQGQPVQNLLLDSHGGLLYASSHSGVVQVPVANCSLYPTCGDCLLARDPYCAWTGSACRLASLYQPDLASRPWTQDIEGASVKELCKNSSYKARFLVPGKPCKQVQIQPNTVNTLACPLLSNLATRLWVHNGAPVNASASCRVLPTGDLLLVGSQQGLGVFQCWSIEEGFQQLVASYCPEVMEEGVMDQKNQRDGTPVIINTSRVSAPAGGRASWGADKSYWNEFLVMCTLFVFAMVLLFLFFLYRHRDGMKLFLKQGECASVHPKTRPIVLPPETRPLNGVGPPSTPLDHRGYQALSDSSPGPRVFTESEKRPLSIQDSFVEVSPVCPRPRVRLGSEIRDSVV.

A signal peptide spans 1–30 (MGRASRSAVLRRALLLLLLLLLLRTTTTRA). At 31–703 (LGPRISVPLG…WGADKSYWNE (673 aa)) the chain is on the extracellular side. A Sema domain is found at 34–510 (RISVPLGSEE…SHSGVVQVPV (477 aa)). Residues Asn53, Asn56, and Asn83 are each glycosylated (N-linked (GlcNAc...) asparagine). A disulfide bridge links Cys107 with Cys118. N-linked (GlcNAc...) asparagine glycosylation is present at Asn129. 3 disulfides stabilise this stretch: Cys136-Cys145, Cys273-Cys386, and Cys297-Cys346. N-linked (GlcNAc...) asparagine glycans are attached at residues Asn397 and Asn512. A PSI domain is found at 512–582 (NCSLYPTCGD…RFLVPGKPCK (71 aa)). A disulfide bridge links Cys513 with Cys530. N-linked (GlcNAc...) asparagine glycans are attached at residues Asn567, Asn615, and Asn680. One can recognise an Ig-like C2-type domain in the interval 589 to 649 (NTVNTLACPL…FQCWSIEEGF (61 aa)). A disulfide bond links Cys596 and Cys642. A helical membrane pass occupies residues 704 to 724 (FLVMCTLFVFAMVLLFLFFLY). The Cytoplasmic portion of the chain corresponds to 725-823 (RHRDGMKLFL…LGSEIRDSVV (99 aa)). Phosphoserine is present on residues Ser779, Ser780, Ser804, and Ser816.

This sequence belongs to the semaphorin family. As to quaternary structure, interacts with GIPC PDZ domain.

Its subcellular location is the membrane. Its function is as follows. Inhibits axonal extension by providing local signals to specify territories inaccessible for growing axons. The sequence is that of Semaphorin-4B from Mus musculus (Mouse).